A 686-amino-acid chain; its full sequence is Alpha-amylase 1 (686 aa).

E125 functions as the Nucleophile in the catalytic mechanism. Residue D216 is the Proton donor of the active site.

The protein belongs to the glycosyl hydrolase 57 family.

Its subcellular location is the cytoplasm. The enzyme catalyses Endohydrolysis of (1-&gt;4)-alpha-D-glucosidic linkages in polysaccharides containing three or more (1-&gt;4)-alpha-linked D-glucose units.. Functionally, this amylase is a highly liquefying-type: oligomers appeared at the beginning of incubation, followed by a graded decrease in the amounts of maltotriose, maltose and glucose in prolonged incubation. This chain is Alpha-amylase 1 (amyA), found in Dictyoglomus thermophilum (strain ATCC 35947 / DSM 3960 / H-6-12).